We begin with the raw amino-acid sequence, 299 residues long: 4-hydroxy-tetrahydrodipicolinate synthase (299 aa).

Thr-47 serves as a coordination point for pyruvate. Residue Tyr-136 is the Proton donor/acceptor of the active site. Lys-164 serves as the catalytic Schiff-base intermediate with substrate. Pyruvate is bound at residue Ala-205.

The protein belongs to the DapA family. As to quaternary structure, homotetramer; dimer of dimers.

The protein resides in the cytoplasm. The catalysed reaction is L-aspartate 4-semialdehyde + pyruvate = (2S,4S)-4-hydroxy-2,3,4,5-tetrahydrodipicolinate + H2O + H(+). The protein operates within amino-acid biosynthesis; L-lysine biosynthesis via DAP pathway; (S)-tetrahydrodipicolinate from L-aspartate: step 3/4. Functionally, catalyzes the condensation of (S)-aspartate-beta-semialdehyde [(S)-ASA] and pyruvate to 4-hydroxy-tetrahydrodipicolinate (HTPA). The sequence is that of 4-hydroxy-tetrahydrodipicolinate synthase from Pediococcus pentosaceus (strain ATCC 25745 / CCUG 21536 / LMG 10740 / 183-1w).